Here is a 163-residue protein sequence, read N- to C-terminus: Aspartate 1-decarboxylase (163 aa).

S25 functions as the Schiff-base intermediate with substrate; via pyruvic acid in the catalytic mechanism. The residue at position 25 (S25) is a Pyruvic acid (Ser). T57 lines the substrate pocket. Residue Y58 is the Proton donor of the active site. 73–75 serves as a coordination point for substrate; it reads GAA.

The protein belongs to the PanD family. Heterooctamer of four alpha and four beta subunits. Requires pyruvate as cofactor. In terms of processing, is synthesized initially as an inactive proenzyme, which is activated by self-cleavage at a specific serine bond to produce a beta-subunit with a hydroxyl group at its C-terminus and an alpha-subunit with a pyruvoyl group at its N-terminus.

Its subcellular location is the cytoplasm. It catalyses the reaction L-aspartate + H(+) = beta-alanine + CO2. It participates in cofactor biosynthesis; (R)-pantothenate biosynthesis; beta-alanine from L-aspartate: step 1/1. Functionally, catalyzes the pyruvoyl-dependent decarboxylation of aspartate to produce beta-alanine. This Saccharopolyspora erythraea (strain ATCC 11635 / DSM 40517 / JCM 4748 / NBRC 13426 / NCIMB 8594 / NRRL 2338) protein is Aspartate 1-decarboxylase.